Here is a 220-residue protein sequence, read N- to C-terminus: Orotidine 5'-phosphate decarboxylase (220 aa).

Residues Asp-12, Lys-34, 60–69, Ser-117, 170–180, Gly-193, and Arg-194 each bind substrate; these read DFKVADIPNT and PGVGAQGGKAS. The active-site Proton donor is the Lys-62.

Belongs to the OMP decarboxylase family. Type 1 subfamily. In terms of assembly, homodimer.

It catalyses the reaction orotidine 5'-phosphate + H(+) = UMP + CO2. It functions in the pathway pyrimidine metabolism; UMP biosynthesis via de novo pathway; UMP from orotate: step 2/2. Catalyzes the decarboxylation of orotidine 5'-monophosphate (OMP) to uridine 5'-monophosphate (UMP). The sequence is that of Orotidine 5'-phosphate decarboxylase from Methanosarcina mazei (strain ATCC BAA-159 / DSM 3647 / Goe1 / Go1 / JCM 11833 / OCM 88) (Methanosarcina frisia).